Consider the following 643-residue polypeptide: Protein tramtrack, beta isoform (643 aa).

Residues Thr-33–Gln-98 form the BTB domain. Disordered regions lie at residues Glu-118 to Gln-148 and Ala-171 to Thr-300. A Glycyl lysine isopeptide (Lys-Gly) (interchain with G-Cter in ubiquitin) cross-link involves residue Lys-123. Low complexity predominate over residues Ser-125 to Pro-145. The span at Thr-176–Ser-187 shows a compositional bias: polar residues. The span at Pro-192 to Lys-201 shows a compositional bias: basic residues. A Glycyl lysine isopeptide (Lys-Gly) (interchain with G-Cter in ubiquitin) cross-link involves residue Lys-201. Residues His-254–Asn-285 are compositionally biased toward basic and acidic residues. Residues Lys-355, Lys-397, Lys-418, Lys-457, Lys-478, and Lys-480 each participate in a glycyl lysine isopeptide (Lys-Gly) (interchain with G-Cter in ubiquitin) cross-link. 2 C2H2-type zinc fingers span residues Tyr-508–His-531 and Tyr-538–His-561. Residue Lys-545 forms a Glycyl lysine isopeptide (Lys-Gly) (interchain with G-Cter in ubiquitin) linkage. The interval Gly-584–Gln-643 is disordered. Positions Ser-604–Gln-643 are enriched in low complexity.

Can form homodimers. Interacts with Trl in vivo via the BTB domain. Interacts with phyl. Interacts with Usp47. Post-translationally, polyubiquitinated by sina. Polyubiquitin linkage is mainly through 'Lys-48', but linkage through 'Lys-63' also occurs. Deubiquitination by Usp47 leads to its stabilization.

It localises to the nucleus. In terms of biological role, binds to a number of sites in the transcriptional regulatory region of ftz. Isoform beta is required to repress inappropriate segmentation gene transcription and repress genes incompatible with development of photoreceptor cell fates. Probable repressor of the transcription of the segmentation genes ftz, eve, h, odd, run, and en. Inhibits Trl-dependent activation of eve. May bind to the region AGGGC/TGG. Degradation of ttk is directed by binding of sinah or sina, via the adapter molecule phyl which binds to the BTB domain of ttk. A second method of degradation exists that is phyl-independent, this is mediated by recognition of motifs in the C-terminus of ttk. The protein is Protein tramtrack, beta isoform (ttk) of Drosophila melanogaster (Fruit fly).